We begin with the raw amino-acid sequence, 297 residues long: 4-diphosphocytidyl-2-C-methyl-D-erythritol kinase (297 aa).

Residue Lys-6 is part of the active site. 94 to 104 (PVAGGMAGGSA) provides a ligand contact to ATP. Residue Asp-136 is part of the active site.

Belongs to the GHMP kinase family. IspE subfamily.

The enzyme catalyses 4-CDP-2-C-methyl-D-erythritol + ATP = 4-CDP-2-C-methyl-D-erythritol 2-phosphate + ADP + H(+). It participates in isoprenoid biosynthesis; isopentenyl diphosphate biosynthesis via DXP pathway; isopentenyl diphosphate from 1-deoxy-D-xylulose 5-phosphate: step 3/6. In terms of biological role, catalyzes the phosphorylation of the position 2 hydroxy group of 4-diphosphocytidyl-2C-methyl-D-erythritol. This Nocardioides sp. (strain ATCC BAA-499 / JS614) protein is 4-diphosphocytidyl-2-C-methyl-D-erythritol kinase.